A 160-amino-acid chain; its full sequence is Small ribosomal subunit protein uS19 (160 aa).

The protein belongs to the universal ribosomal protein uS19 family.

Protein S19 forms a complex with S13 that binds strongly to the 16S ribosomal RNA. The polypeptide is Small ribosomal subunit protein uS19 (Pyrobaculum islandicum (strain DSM 4184 / JCM 9189 / GEO3)).